The following is a 284-amino-acid chain: Citrate lyase subunit beta-like protein (284 aa).

Substrate contacts are provided by Arg74 and Glu129. Residues Glu129 and Asp155 each coordinate Mg(2+).

Belongs to the HpcH/HpaI aldolase family. Citrate lyase beta subunit-like subfamily. As to quaternary structure, homotrimer. Mg(2+) is required as a cofactor.

May play a role in fatty acid biosynthesis. The polypeptide is Citrate lyase subunit beta-like protein (Deinococcus radiodurans (strain ATCC 13939 / DSM 20539 / JCM 16871 / CCUG 27074 / LMG 4051 / NBRC 15346 / NCIMB 9279 / VKM B-1422 / R1)).